We begin with the raw amino-acid sequence, 657 residues long: uncharacterized protein (657 aa).

Catalysis depends on charge relay system residues S518 and H631.

It belongs to the peptidase S9C family.

This is an uncharacterized protein from Bacillus subtilis (strain 168).